Here is a 231-residue protein sequence, read N- to C-terminus: Sugar fermentation stimulation protein homolog (231 aa).

The protein belongs to the SfsA family.

The chain is Sugar fermentation stimulation protein homolog from Geotalea daltonii (strain DSM 22248 / JCM 15807 / FRC-32) (Geobacter daltonii).